The sequence spans 532 residues: Berberine bridge enzyme-like 23 (532 aa).

The first 22 residues, 1-22, serve as a signal peptide directing secretion; sequence MRTLEAFALSLFLVFLVKWVNS. The cysteines at positions 36 and 102 are disulfide-linked. N-linked (GlcNAc...) asparagine glycosylation occurs at Asn78. The 177-residue stretch at 80–256 folds into the FAD-binding PCMH-type domain; sequence TSQKPILIVT…LSWKVKLVRV (177 aa). A cross-link (6-(S-cysteinyl)-8alpha-(pros-histidyl)-FAD (His-Cys)) is located at residues 117 to 180; the sequence is HDYEGLSYLS…KIHGFPAGTC (64 aa). Residues Asn272 and Asn487 are each glycosylated (N-linked (GlcNAc...) asparagine).

This sequence belongs to the oxygen-dependent FAD-linked oxidoreductase family. FAD serves as cofactor. Post-translationally, the FAD cofactor is bound via a bicovalent 6-S-cysteinyl, 8alpha-N1-histidyl FAD linkage. Accumulates in cell walls of etiolated hypocotyls.

The protein localises to the secreted. The protein resides in the cell wall. The protein is Berberine bridge enzyme-like 23 of Arabidopsis thaliana (Mouse-ear cress).